The primary structure comprises 557 residues: 2-succinyl-5-enolpyruvyl-6-hydroxy-3-cyclohexene-1-carboxylate synthase (557 aa).

It belongs to the TPP enzyme family. MenD subfamily. As to quaternary structure, homodimer. Mg(2+) is required as a cofactor. Requires Mn(2+) as cofactor. It depends on thiamine diphosphate as a cofactor.

The catalysed reaction is isochorismate + 2-oxoglutarate + H(+) = 5-enolpyruvoyl-6-hydroxy-2-succinyl-cyclohex-3-ene-1-carboxylate + CO2. It functions in the pathway quinol/quinone metabolism; 1,4-dihydroxy-2-naphthoate biosynthesis; 1,4-dihydroxy-2-naphthoate from chorismate: step 2/7. It participates in quinol/quinone metabolism; menaquinone biosynthesis. Its function is as follows. Catalyzes the thiamine diphosphate-dependent decarboxylation of 2-oxoglutarate and the subsequent addition of the resulting succinic semialdehyde-thiamine pyrophosphate anion to isochorismate to yield 2-succinyl-5-enolpyruvyl-6-hydroxy-3-cyclohexene-1-carboxylate (SEPHCHC). In Staphylococcus aureus (strain MSSA476), this protein is 2-succinyl-5-enolpyruvyl-6-hydroxy-3-cyclohexene-1-carboxylate synthase.